The chain runs to 149 residues: Cytochrome c-type biogenesis protein CcmE (149 aa).

Residues 1–8 are Cytoplasmic-facing; sequence MNPKRKQR. Residues 9 to 29 form a helical; Signal-anchor for type II membrane protein membrane-spanning segment; the sequence is LIIVSFLVIGVSATVGLIMAA. Residues 30–149 lie on the Periplasmic side of the membrane; it reads LSSNVNHFYN…AQDAAPAQTY (120 aa). Heme is bound by residues H124 and Y128.

This sequence belongs to the CcmE/CycJ family.

Its subcellular location is the cell inner membrane. Functionally, heme chaperone required for the biogenesis of c-type cytochromes. Transiently binds heme delivered by CcmC and transfers the heme to apo-cytochromes in a process facilitated by CcmF and CcmH. This is Cytochrome c-type biogenesis protein CcmE from Hahella chejuensis (strain KCTC 2396).